The sequence spans 589 residues: MTISIDRPAPVSSWRTYRRLLAFAKPYRLLLVAALIAALIEAAGTTGFLALMKPITDETFIYKNAEVSRWLPVQIILLFVVRGVAGYITDMAMGKSARSIARDLRIKVMAKYLRLPGSRFDSEPVPSMLIRLGSDSDQVAQAAVDAVKVMIQQSLQVIGALALMLWHSWQVTLTILVLAPVLAWVMDKVARRYRRISHSIQESGAQLLQAADQTLSSHQEVKIYGAQQTEMERYGALANRNLRLAMKVESTRGISTATVQMIGAIGLSALLFVAGAQALAGRLTAGDFVVLMTSMLTIIPGLKQLTNVQNMVQRGLASAERLFSVLDSPDEPDQGTVPLTRAKGLIEFRDVTARYPGQVNPALADVSFVAQPGTVTAIVGRSGSGKSSLIKLIPRFYEAEAGQILLDGHPVQAYALADLRRQIALVGQQVMLFDGSIADNVAFGEMRNADAGKLERAILGANAMEFVAQLPEGLQSHVGTKGGRLSGGQRQRLAIARAMLKDAPVLILDEATAALDNESERLVQDALHKLMPDRTTLVIAHRLSTIEHADQVLVMDQGRIVERGTHHQLLAQGGLYSHLHGMQFRERQA.

A run of 5 helical transmembrane segments spans residues 29 to 49 (LLLVAALIAALIEAAGTTGFL), 70 to 90 (WLPVQIILLFVVRGVAGYITD), 157 to 177 (VIGALALMLWHSWQVTLTILV), 261 to 281 (MIGAIGLSALLFVAGAQALAG), and 283 to 303 (LTAGDFVVLMTSMLTIIPGLK). Positions 32–314 (VAALIAALIE…LTNVQNMVQR (283 aa)) constitute an ABC transmembrane type-1 domain. The ABC transporter domain occupies 346–582 (IEFRDVTARY…GGLYSHLHGM (237 aa)). ATP is bound at residue 380 to 387 (GRSGSGKS).

Belongs to the ABC transporter superfamily. Lipid exporter (TC 3.A.1.106) family. Homodimer.

The protein resides in the cell inner membrane. The catalysed reaction is ATP + H2O + lipid A-core oligosaccharideSide 1 = ADP + phosphate + lipid A-core oligosaccharideSide 2.. In terms of biological role, involved in lipopolysaccharide (LPS) biosynthesis. Translocates lipid A-core from the inner to the outer leaflet of the inner membrane. Transmembrane domains (TMD) form a pore in the inner membrane and the ATP-binding domain (NBD) is responsible for energy generation. The polypeptide is ATP-dependent lipid A-core flippase (Xanthomonas axonopodis pv. citri (strain 306)).